Reading from the N-terminus, the 628-residue chain is Basal cell adhesion molecule (628 aa).

An N-terminal signal peptide occupies residues 1–31; it reads MEPPDAPAQARGAPRLLLLAVLLAAHPDAQA. Ig-like V-type domains lie at 32-142 and 147-257; these read EVRL…ARLN and PEAT…PTFH. Topologically, residues 32–547 are extracellular; the sequence is EVRLSVPPLV…GTVSPQTSQA (516 aa). Intrachain disulfides connect Cys-53/Cys-125, Cys-172/Cys-237, and Cys-291/Cys-337. Ig-like C2-type domains follow at residues 274-355, 363-441, and 448-541; these read PSTP…KTLE, PLEL…QNFT, and PELK…GTVS. The interaction with laminin alpha5 stretch occupies residues 309–312; that stretch reads EQEE. 5 N-linked (GlcNAc...) asparagine glycosylation sites follow: Asn-321, Asn-377, Asn-383, Asn-419, and Asn-439. Cys-384 and Cys-424 are oxidised to a cystine. An intrachain disulfide couples Cys-473 to Cys-522. Residues 548–568 traverse the membrane as a helical segment; sequence GVAVMAVAVSVGLLLLVVAVF. Residues 569-628 lie on the Cytoplasmic side of the membrane; the sequence is YCVRRKGGPCCRQRREKGAPPPGEPGLSHSGSEQPEQTGLLMGGASGGARGGSGGFGDEC. The disordered stretch occupies residues 579–628; that stretch reads CRQRREKGAPPPGEPGLSHSGSEQPEQTGLLMGGASGGARGGSGGFGDEC. At Ser-596 the chain carries Phosphoserine; by GSK3. At Ser-598 the chain carries Phosphoserine; by CK2. Residue Ser-600 is modified to Phosphoserine. The segment covering 609 to 628 has biased composition (gly residues); that stretch reads LMGGASGGARGGSGGFGDEC. Residue Ser-621 is modified to Phosphoserine; by PKA or PKB/AKT1.

In terms of assembly, homodimer. Interacts with ITGA4:ITGB1. Interacts with spectrins SPTA1 and SPTB1. Epinephrine-stimulated phosphorylation of Ser-621 by PKA enhances adhesion to laminin. Ser-621 can also be phosphorylated by AKT1. In terms of tissue distribution, wide tissue distribution (highest in the pancreas and very low in brain). Closely associated with the basal layer of cells in epithelia and the endothelium of blood vessel walls.

The protein resides in the cell membrane. Its function is as follows. Transmembrane glycoprotein that functions as both a receptor and an adhesion molecule playing a crucial role in cell adhesion, motility, migration and invasion. Extracellular domain enables binding to extracellular matrix proteins, such as laminin, integrin and other ligands while its intracellular domain interacts with cytoskeletal proteins like hemoglobin, facilitating cell signal transduction. Serves as a receptor for laminin alpha-5/LAMA5 to promote cell adhesion. Mechanistically, JAK2 induces BCAM phosphorylation and activates its adhesion to laminin by stimulating a Rap1/AKT signaling pathway in the absence of EPOR. This chain is Basal cell adhesion molecule (BCAM), found in Homo sapiens (Human).